Consider the following 299-residue polypeptide: tRNA pseudouridine synthase B (299 aa).

Catalysis depends on Asp49, which acts as the Nucleophile. The 59-residue stretch at 241–299 (MPRVTVSGRAAARVLHGVAPAVRVEHPDGTTVAVVAANGALLALAEADGGGLRLRKVFG) folds into the PUA domain.

This sequence belongs to the pseudouridine synthase TruB family. Type 1 subfamily.

The enzyme catalyses uridine(55) in tRNA = pseudouridine(55) in tRNA. Its function is as follows. Responsible for synthesis of pseudouridine from uracil-55 in the psi GC loop of transfer RNAs. The protein is tRNA pseudouridine synthase B of Symbiobacterium thermophilum (strain DSM 24528 / JCM 14929 / IAM 14863 / T).